Here is a 441-residue protein sequence, read N- to C-terminus: FBD-associated F-box protein At5g18780 (441 aa).

An F-box domain is found at 10–56 (EDRISILPEPLLCHILSFLRTKDSVRTSVLSSRWRDLWLWVPRLDLD). An FBD domain is found at 366-410 (LPRCLISSLASVDIESPITDKATELKLVSYLLENSTTLKKLVLRL).

In Arabidopsis thaliana (Mouse-ear cress), this protein is FBD-associated F-box protein At5g18780.